Consider the following 265-residue polypeptide: Thiamine thiazole synthase (265 aa).

NAD(+) is bound by residues A43, 62 to 63 (ER), G70, V134, and 162 to 164 (HVD). The Fe cation site is built by D164 and H179. NAD(+) is bound at residue M229. A glycine-binding site is contributed by R239.

Belongs to the THI4 family. In terms of assembly, homooctamer; tetramer of dimers. Fe(2+) is required as a cofactor.

It carries out the reaction hydrogen sulfide + glycine + NAD(+) = ADP-5-ethyl-4-methylthiazole-2-carboxylate + nicotinamide + 3 H2O + H(+). It participates in cofactor biosynthesis; thiamine diphosphate biosynthesis. Functionally, involved in the biosynthesis of the thiazole moiety of thiamine. Catalyzes the conversion of NAD and glycine to adenosine diphosphate 5-(2-hydroxyethyl)-4-methylthiazole-2-carboxylate (ADT), an adenylated thiazole intermediate, using free sulfide as a source of sulfur. In Sulfolobus acidocaldarius (strain ATCC 33909 / DSM 639 / JCM 8929 / NBRC 15157 / NCIMB 11770), this protein is Thiamine thiazole synthase.